Here is a 589-residue protein sequence, read N- to C-terminus: Kelch-like protein 25 (589 aa).

Residues 46–114 form the BTB domain; sequence TDVTLWAGDR…AYSSRIVINE (69 aa). One can recognise a BACK domain in the interval 149 to 250; the sequence is CLGMMVLSDA…LPSDCLKKAV (102 aa). Kelch repeat units follow at residues 296-340, 341-388, 389-444, 446-492, 493-538, and 539-585; these read TLLI…AIGC, KVYV…ELEN, CLYV…SAKL, LFVF…VLGS, QIFI…ASGN, and KLYV…STWK.

Component of the BCR(KLHL25) E3 ubiquitin ligase complex, at least composed of CUL3, KLHL25 and RBX1.

It participates in protein modification; protein ubiquitination. In terms of biological role, substrate-specific adapter of a BCR (BTB-CUL3-RBX1) E3 ubiquitin ligase complex involved in various processes, such as translation homeostasis and lipid synthesis. The BCR(KLHL25) ubiquitin ligase complex acts by mediating ubiquitination of hypophosphorylated EIF4EBP1 (4E-BP1): ubiquitination and subsequent degradation of hypophosphorylated EIF4EBP1 (4E-BP1) probably serves as a homeostatic mechanism to maintain translation and prevent eIF4E inhibition when eIF4E levels are low. The BCR(KLHL25) complex does not target EIF4EBP1 (4E-BP1) when it is hyperphosphorylated or associated with eIF4E. The BCR(KLHL25) complex also acts as a regulator of lipid synthesis by mediating ubiquitination and degradation of ACLY, thereby inhibiting lipid synthesis. BCR(KLHL25)-mediated degradation of ACLY promotes fatty acid oxidation and is required for differentiation of inducible regulatory T (iTreg) cells. This chain is Kelch-like protein 25, found in Rattus norvegicus (Rat).